A 326-amino-acid chain; its full sequence is Undecaprenyl-phosphate 4-deoxy-4-formamido-L-arabinose transferase (326 aa).

Residues 1-235 lie on the Cytoplasmic side of the membrane; it reads MFEIHPIKKV…TCLTTTPLRM (235 aa). A helical membrane pass occupies residues 236–256; it reads LSLLGSIIATSGFSLAILLVV. The Periplasmic segment spans residues 257 to 269; sequence LRLAFGSQWSGEG. Residues 270–290 form a helical membrane-spanning segment; the sequence is VFMLFAVLFTFIGAQFIGMGL. Residues 291–326 lie on the Cytoplasmic side of the membrane; sequence LGEYIGRIYNDVRARPRYFVQKVIRPASSIDIEENH.

The protein belongs to the glycosyltransferase 2 family.

The protein localises to the cell inner membrane. It carries out the reaction UDP-4-deoxy-4-formamido-beta-L-arabinose + di-trans,octa-cis-undecaprenyl phosphate = 4-deoxy-4-formamido-alpha-L-arabinopyranosyl di-trans,octa-cis-undecaprenyl phosphate + UDP. Its pathway is glycolipid biosynthesis; 4-amino-4-deoxy-alpha-L-arabinose undecaprenyl phosphate biosynthesis; 4-amino-4-deoxy-alpha-L-arabinose undecaprenyl phosphate from UDP-4-deoxy-4-formamido-beta-L-arabinose and undecaprenyl phosphate: step 1/2. It participates in bacterial outer membrane biogenesis; lipopolysaccharide biosynthesis. Functionally, catalyzes the transfer of 4-deoxy-4-formamido-L-arabinose from UDP to undecaprenyl phosphate. The modified arabinose is attached to lipid A and is required for resistance to polymyxin and cationic antimicrobial peptides. The protein is Undecaprenyl-phosphate 4-deoxy-4-formamido-L-arabinose transferase of Escherichia fergusonii (strain ATCC 35469 / DSM 13698 / CCUG 18766 / IAM 14443 / JCM 21226 / LMG 7866 / NBRC 102419 / NCTC 12128 / CDC 0568-73).